The following is a 356-amino-acid chain: Dihydroorotate dehydrogenase (quinone) (356 aa).

Residues 67-71 (PGFDK) and Thr-91 each bind FMN. Lys-71 provides a ligand contact to substrate. Residue 116-120 (NRMGF) coordinates substrate. FMN-binding residues include Asn-147 and Asn-178. Asn-178 is a binding site for substrate. Residue Ser-181 is the Nucleophile of the active site. Substrate is bound at residue Asn-183. FMN-binding residues include Lys-218 and Ser-246. 247-248 (NT) is a binding site for substrate. Residues Gly-268, Gly-297, and 318 to 319 (YS) contribute to the FMN site.

The protein belongs to the dihydroorotate dehydrogenase family. Type 2 subfamily. Monomer. FMN serves as cofactor.

The protein resides in the cell membrane. It carries out the reaction (S)-dihydroorotate + a quinone = orotate + a quinol. Its pathway is pyrimidine metabolism; UMP biosynthesis via de novo pathway; orotate from (S)-dihydroorotate (quinone route): step 1/1. Functionally, catalyzes the conversion of dihydroorotate to orotate with quinone as electron acceptor. The sequence is that of Dihydroorotate dehydrogenase (quinone) from Sphingopyxis alaskensis (strain DSM 13593 / LMG 18877 / RB2256) (Sphingomonas alaskensis).